Reading from the N-terminus, the 240-residue chain is tRNA (guanine-N(1)-)-methyltransferase (240 aa).

Residues glycine 110 and 129 to 134 (LGDFVL) each bind S-adenosyl-L-methionine.

The protein belongs to the RNA methyltransferase TrmD family. Homodimer.

It is found in the cytoplasm. It carries out the reaction guanosine(37) in tRNA + S-adenosyl-L-methionine = N(1)-methylguanosine(37) in tRNA + S-adenosyl-L-homocysteine + H(+). Functionally, specifically methylates guanosine-37 in various tRNAs. The sequence is that of tRNA (guanine-N(1)-)-methyltransferase from Clostridium botulinum (strain 657 / Type Ba4).